The chain runs to 98 residues: NADH-ubiquinone oxidoreductase chain 4L (98 aa).

The next 3 membrane-spanning stretches (helical) occupy residues 1–21 (MSMVYFNIFMAFTVSFVGLLM), 29–49 (SLLCLEGMMLSLFVMMSMTIL), and 61–81 (IILLVFAACEAALGLSLLVMV).

This sequence belongs to the complex I subunit 4L family. In terms of assembly, core subunit of respiratory chain NADH dehydrogenase (Complex I) which is composed of 45 different subunits.

Its subcellular location is the mitochondrion inner membrane. The catalysed reaction is a ubiquinone + NADH + 5 H(+)(in) = a ubiquinol + NAD(+) + 4 H(+)(out). In terms of biological role, core subunit of the mitochondrial membrane respiratory chain NADH dehydrogenase (Complex I) which catalyzes electron transfer from NADH through the respiratory chain, using ubiquinone as an electron acceptor. Part of the enzyme membrane arm which is embedded in the lipid bilayer and involved in proton translocation. The sequence is that of NADH-ubiquinone oxidoreductase chain 4L (MT-ND4L) from Phocarctos hookeri (Hooker's sea lion).